Here is a 282-residue protein sequence, read N- to C-terminus: Pantothenate synthetase (282 aa).

ATP is bound at residue 30–37; it reads MGYLHEGH. The active-site Proton donor is His-37. Gln-61 serves as a coordination point for (R)-pantoate. Gln-61 provides a ligand contact to beta-alanine. Residue 147–150 participates in ATP binding; the sequence is GQKD. Gln-153 contributes to the (R)-pantoate binding site. Residues Val-176 and 184–187 each bind ATP; that span reads MSSR.

This sequence belongs to the pantothenate synthetase family. In terms of assembly, homodimer.

The protein localises to the cytoplasm. It catalyses the reaction (R)-pantoate + beta-alanine + ATP = (R)-pantothenate + AMP + diphosphate + H(+). Its pathway is cofactor biosynthesis; (R)-pantothenate biosynthesis; (R)-pantothenate from (R)-pantoate and beta-alanine: step 1/1. In terms of biological role, catalyzes the condensation of pantoate with beta-alanine in an ATP-dependent reaction via a pantoyl-adenylate intermediate. The polypeptide is Pantothenate synthetase (Pelotomaculum thermopropionicum (strain DSM 13744 / JCM 10971 / SI)).